Here is a 401-residue protein sequence, read N- to C-terminus: DNA replication and repair protein RecF (401 aa).

Residue 30–37 coordinates ATP; it reads GYNGIGKT.

The protein belongs to the RecF family.

Its subcellular location is the cytoplasm. In terms of biological role, the RecF protein is involved in DNA metabolism; it is required for DNA replication and normal SOS inducibility. RecF binds preferentially to single-stranded, linear DNA. It also seems to bind ATP. The polypeptide is DNA replication and repair protein RecF (Arthrobacter sp. (strain FB24)).